Here is a 281-residue protein sequence, read N- to C-terminus: Transcription factor lfc1 (281 aa).

The segment at residues 60 to 87 (CLTCRMKKIKCDETKPTCARCTHGQREC) is a DNA-binding region (zn(2)-C6 fungal-type).

It is found in the nucleus. Functionally, transcription factor that acts as a negative regulator of basidioma development via repressing the expression of genes involved in basidioma development, including hydrophobins such as Hyd-1 and Hyd-8, lectins such as JRL1, as well as the fruiting body differentiation gene FVFD16. In Flammulina velutipes (Agaricus velutipes), this protein is Transcription factor lfc1.